A 369-amino-acid chain; its full sequence is Dihydroorotate dehydrogenase (quinone) (369 aa).

Residues 66–70 (AGFDK) and T90 each bind FMN. K70 is a binding site for substrate. A substrate-binding site is contributed by 115 to 119 (NRMGF). FMN-binding residues include N143 and N176. Position 176 (N176) interacts with substrate. The active-site Nucleophile is S179. Residue N181 participates in substrate binding. Residues K217 and T245 each contribute to the FMN site. 246–247 (NT) is a binding site for substrate. Residues G271, G300, and 321 to 322 (YT) contribute to the FMN site.

Belongs to the dihydroorotate dehydrogenase family. Type 2 subfamily. Monomer. It depends on FMN as a cofactor.

The protein resides in the cell membrane. It catalyses the reaction (S)-dihydroorotate + a quinone = orotate + a quinol. It participates in pyrimidine metabolism; UMP biosynthesis via de novo pathway; orotate from (S)-dihydroorotate (quinone route): step 1/1. Its function is as follows. Catalyzes the conversion of dihydroorotate to orotate with quinone as electron acceptor. This Nocardia farcinica (strain IFM 10152) protein is Dihydroorotate dehydrogenase (quinone).